A 406-amino-acid polypeptide reads, in one-letter code: Putative ankyrin repeat protein RF_0266 (406 aa).

5 ANK repeats span residues 68 to 98 (TSHSTLSLIAVINNDLETLNLLINFGFDINN), 103 to 129 (NYITPLGLAADKGYKEIVKLLCEQDDI), 130 to 161 (KVQNALYYAIRGENKSIEIIDLLVQKGAIIKP), 163 to 189 (HIELAISHSNLSVFEYLFEKKLPDIEK), and 203 to 232 (SIDCILGEASKYQNTEVIKFLLSSGYKPEQ).

The protein is Putative ankyrin repeat protein RF_0266 of Rickettsia felis (strain ATCC VR-1525 / URRWXCal2) (Rickettsia azadi).